A 620-amino-acid polypeptide reads, in one-letter code: Carotenoid isomerooxygenase (620 aa).

Fe cation-binding residues include His211, His267, and His337. The disordered stretch occupies residues 440–459; it reads NGKQATAGEESPKRDAKRGR. Positions 449 to 459 are enriched in basic and acidic residues; the sequence is ESPKRDAKRGR. A Fe cation-binding site is contributed by His612.

The protein belongs to the carotenoid oxygenase family. It depends on Fe(2+) as a cofactor. As to expression, expression follows organogenesis of the larval Bolwig's organ (BO), which mediates larval photophobic behavior. In the adult, expression is restricted exclusively to the brain. Expressed in both neuronal cells and glia cells. Not active within photoreceptors. Active within neuronal cells within the central nervous system.

It catalyses the reaction all-trans-zeaxanthin + O2 = (3R)-11-cis-3-hydroxyretinal + (3R)-all-trans-3-hydroxyretinal. It functions in the pathway cofactor metabolism; retinol metabolism. In terms of biological role, catalyzes the oxidative cleavage at the 15,15'-double bond of carotenoids and the simultaneous all-trans to 11-cis isomerization of one cleavage product. Carotenoids like 11-cis retinal can promote visual pigment biogenesis in the dark. Essential for the biosynthesis of the 3-hydroxyretinal chromophore of rhodopsin from zeaxanthin and for proper photoreceptor development. Also essential for larval light perception. The polypeptide is Carotenoid isomerooxygenase (ninaB) (Drosophila melanogaster (Fruit fly)).